Reading from the N-terminus, the 573-residue chain is Proline--tRNA ligase (573 aa).

This sequence belongs to the class-II aminoacyl-tRNA synthetase family. ProS type 1 subfamily. In terms of assembly, homodimer.

The protein localises to the cytoplasm. It carries out the reaction tRNA(Pro) + L-proline + ATP = L-prolyl-tRNA(Pro) + AMP + diphosphate. In terms of biological role, catalyzes the attachment of proline to tRNA(Pro) in a two-step reaction: proline is first activated by ATP to form Pro-AMP and then transferred to the acceptor end of tRNA(Pro). As ProRS can inadvertently accommodate and process non-cognate amino acids such as alanine and cysteine, to avoid such errors it has two additional distinct editing activities against alanine. One activity is designated as 'pretransfer' editing and involves the tRNA(Pro)-independent hydrolysis of activated Ala-AMP. The other activity is designated 'posttransfer' editing and involves deacylation of mischarged Ala-tRNA(Pro). The misacylated Cys-tRNA(Pro) is not edited by ProRS. The chain is Proline--tRNA ligase from Methylobacillus flagellatus (strain ATCC 51484 / DSM 6875 / VKM B-1610 / KT).